The sequence spans 177 residues: MSMITSMLGRKQNAQQKGGGGGGRTGGGGGGEIEPVSVDIMEPFMDAISLTAFAAAPSAAAAAAGVPSTASMDWKETAAAHVFMADMPGVRREEVRVEVEEEKVLRISGQRARAAEEKGERWHRVERSSERFVRTVRLPPNANTDGVHAALDNGVLTITIPKDNDRKPHARIIPITN.

The tract at residues methionine 1 to proline 35 is disordered. Over residues lysine 17–glutamate 32 the composition is skewed to gly residues. Residues alanine 63–asparagine 177 form the sHSP domain.

This sequence belongs to the small heat shock protein (HSP20) family. May form oligomeric structures.

It is found in the cytoplasm. The sequence is that of 18.9 kDa heat shock protein (HSP18.9) from Oryza sativa subsp. japonica (Rice).